We begin with the raw amino-acid sequence, 429 residues long: CinA-like protein (429 aa).

Belongs to the CinA family.

This chain is CinA-like protein, found in Prochlorococcus marinus (strain MIT 9313).